The primary structure comprises 234 residues: Cytidylate kinase (234 aa).

10–18 (GYSACGKST) provides a ligand contact to ATP.

The protein belongs to the cytidylate kinase family. Type 1 subfamily.

The protein resides in the cytoplasm. It catalyses the reaction CMP + ATP = CDP + ADP. The enzyme catalyses dCMP + ATP = dCDP + ADP. This chain is Cytidylate kinase, found in Cytophaga hutchinsonii (strain ATCC 33406 / DSM 1761 / CIP 103989 / NBRC 15051 / NCIMB 9469 / D465).